Reading from the N-terminus, the 447-residue chain is Alkylglycerol monooxygenase (447 aa).

A run of 2 helical transmembrane segments spans residues 43–63 and 111–131; these read ATPF…ILKG and WDSP…YYWF. The Fatty acid hydroxylase domain maps to 118-249; sequence YLTFLGVDFG…LIIWDRIFGT (132 aa). The Histidine box-1 motif lies at 132–136; it reads HRMAH. Residues 145 to 149 carry the Histidine box-2 motif; it reads HQAHH. The helical transmembrane segment at 170–190 threads the bilayer; it reads SWVFYCPLALFVPPSVFAVHI. The short motif at 221–225 is the Histidine box-3 element; the sequence is HRVHH. The next 3 membrane-spanning stretches (helical) occupy residues 334-354, 363-383, and 413-433; these read FLKI…EETF, VTIL…GFLL, and IESL…FWGV.

It belongs to the sterol desaturase family. TMEM195 subfamily. It depends on Fe cation as a cofactor.

The protein localises to the endoplasmic reticulum membrane. It carries out the reaction 1-O-(1,2-saturated-alkyl)-sn-glycerol + (6R)-L-erythro-5,6,7,8-tetrahydrobiopterin + O2 = a 1-(1-hydroxyalkyl)-sn-glycerol + (6R)-L-erythro-6,7-dihydrobiopterin + H2O. Glyceryl-ether monooxygenase that cleaves the O-alkyl bond of ether lipids. Ether lipids are essential components of brain membranes. This chain is Alkylglycerol monooxygenase (Agmo), found in Rattus norvegicus (Rat).